A 474-amino-acid polypeptide reads, in one-letter code: MSRNQSREARPNREVAQTVSERVYVETQGCQMNDYDAERLVDVLVSQAGARRVDRPEEADLLLLNTCSVREKAQEKVFSQLGRWRRYKQDNPTVLIGVGGCVASQEGAEILRRAPFVDLVFGPQTLHRLPQMLARRRSGASAQVDVDFPEIEKFDHLPQPRAEGPTAYVSVMEGCSKYCSFCVVPYTRGDEISRPVADVLAEVRSLAEQGVREVNLLGQNVNAYAGALDDGERADLGLLIEAVARIPGIDRIRFTTSHPAEFHSGLIDAYRDVPELADFLHLPVQSGSDLILKLMKRGHDIAAYEALIDQIRAVRPGLVLATDLIVGFPGETEAEFEETLAMVDRVGFDGGAFSFVYSPRPGTPAAELHDGVPEADKRAWLQRLQARLHEQQSAAARALLGTRQSVLIDGPSRRDPRELSGRTSGNRVVNFPGDPSWIGRFAEVEITDARTHSLRGRVVSVEGQAMHAAVGAGG.

Residues 21 to 138 enclose the MTTase N-terminal domain; it reads ERVYVETQGC…LPQMLARRRS (118 aa). [4Fe-4S] cluster contacts are provided by Cys-30, Cys-67, Cys-101, Cys-175, Cys-179, and Cys-182. One can recognise a Radical SAM core domain in the interval 161-395; that stretch reads RAEGPTAYVS…ARLHEQQSAA (235 aa). In terms of domain architecture, TRAM spans 397–460; it reads RALLGTRQSV…THSLRGRVVS (64 aa).

The protein belongs to the methylthiotransferase family. MiaB subfamily. Monomer. It depends on [4Fe-4S] cluster as a cofactor.

Its subcellular location is the cytoplasm. It catalyses the reaction N(6)-dimethylallyladenosine(37) in tRNA + (sulfur carrier)-SH + AH2 + 2 S-adenosyl-L-methionine = 2-methylsulfanyl-N(6)-dimethylallyladenosine(37) in tRNA + (sulfur carrier)-H + 5'-deoxyadenosine + L-methionine + A + S-adenosyl-L-homocysteine + 2 H(+). In terms of biological role, catalyzes the methylthiolation of N6-(dimethylallyl)adenosine (i(6)A), leading to the formation of 2-methylthio-N6-(dimethylallyl)adenosine (ms(2)i(6)A) at position 37 in tRNAs that read codons beginning with uridine. This is tRNA-2-methylthio-N(6)-dimethylallyladenosine synthase from Halorhodospira halophila (strain DSM 244 / SL1) (Ectothiorhodospira halophila (strain DSM 244 / SL1)).